The chain runs to 376 residues: Calcium uniporter protein, mitochondrial (376 aa).

Residues 1 to 34 (MAAKVCRSVLLLSRSSGAVASSAYPAFGVSSQRH) constitute a mitochondrion transit peptide. Over 35–257 (QGTKTEALSM…LSKKAERRTT (223 aa)) the chain is Mitochondrial matrix. The segment at 99–189 (VSVVYQNGLP…TSYLVQPPRR (91 aa)) is N-terminal MCU domain. The stretch at 213–254 (TLRIEEHQLNKERELIGRLEDLNSQLQPLEKVKEELSKKAER) forms a coiled coil. Residues 258–280 (WVLWGGMAYMATQFGILARLTWW) form a helical membrane-spanning segment. Residues 281–289 (EYSWDIMEP) lie on the Mitochondrial intermembrane side of the membrane. Residues 284–292 (WDIMEPVTY) carry the Selectivity filter motif. Glutamate 288 is a binding site for Ca(2+). The chain crosses the membrane as a helical span at residues 290-309 (VTYFITYGTAMAMYAYFVLT). The segment at 309-314 (TRQEYL) is juxtamembrane helix. The Mitochondrial matrix segment spans residues 310-376 (RQEYLYPDAR…PIQQIDTSKD (67 aa)). A coiled-coil region spans residues 336-363 (FDIEKYNKLKDAIAEAELDLKRLRDPLQ).

The protein belongs to the MCU (TC 1.A.77) family. As to quaternary structure, homotetramer. Component of the uniplex complex.

The protein localises to the mitochondrion inner membrane. The enzyme catalyses Ca(2+)(in) = Ca(2+)(out). MCU channel activity is regulated by the heterodimer composed of micu1 and micu2, which act as calcium-sensors. At low calcium levels, micu1 occludes the pore of the MCU channel, preventing mitochondrial calcium uptake. At higher calcium levels, calcium-binding to micu1 and micu2 induces a conformational change that weakens mcu-micu1 interactions and moves the micu1-micu2 heterodimer away from the pore, allowing calcium permeation through the channel. MCU channel activity is gated by emre/smdt1 via the juxtamembrane helix loop. Inhibited by ruthenium red or its derivative Ru360. Channel-forming and calcium-conducting subunit of the mitochondrial inner membrane calcium uniporter complex (uniplex), which mediates calcium uptake into the mitochondrial matrix. Mcu channel activity is regulated by the calcium-sensor subunits of the uniplex micu1 and micu2. Mitochondrial calcium homeostasis plays key roles in cellular physiology and regulates ATP production, cytoplasmic calcium signals and activation of cell death pathways. Involved in buffering the amplitude of systolic calcium rises in cardiomyocytes. While dispensable for baseline homeostatic cardiac function, acts as a key regulator of short-term mitochondrial calcium loading underlying a 'fight-or-flight' response during acute stress: acts by mediating a rapid increase of mitochondrial calcium in pacemaker cells. Mitochondrial calcium uptake in skeletal muscle cells is involved in muscle size in adults. This is Calcium uniporter protein, mitochondrial from Danio rerio (Zebrafish).